The following is an 832-amino-acid chain: Spindle pole body component alp6 (832 aa).

Positions 1-186 are interaction with mzt1; that stretch reads MSEIHVKTAL…STETSSVQHT (186 aa). Threonine 286 is subject to Phosphothreonine.

It belongs to the TUBGCP family. In terms of assembly, part of the gamma-tubulin complex. Interacts directly with mzt1. Interacts with mto1. Interacts with mto2.

The protein localises to the cytoplasm. It localises to the cytoskeleton. The protein resides in the microtubule organizing center. Its subcellular location is the spindle pole body. Functionally, component of the gamma tubule complex that is required for the regulation of both interphase microtubules and mitotic bipolar spindles. This Schizosaccharomyces pombe (strain 972 / ATCC 24843) (Fission yeast) protein is Spindle pole body component alp6 (alp6).